The primary structure comprises 249 residues: EID1-like F-box protein 2 (249 aa).

One can recognise an F-box domain in the interval 16–68; sequence HCTKGHLSEEVLFLMVQHLNWNPNVIATLSCVCKWFDDLAKRLLWKEFCRARA.

The chain is EID1-like F-box protein 2 (EDL2) from Arabidopsis thaliana (Mouse-ear cress).